The following is an 819-amino-acid chain: Sulfate permease 2 (819 aa).

N24 is a glycosylation site (N-linked (GlcNAc...) asparagine). Helical transmembrane passes span 72–92, 104–124, 129–149, 172–192, 194–214, 273–293, 328–348, 365–385, 454–474, and 477–497; these read YNLTWLLGDFIAGVTVGFVVV, LAPEYGLYTSFVGFVLYWAFA, ITIGAVAVMSTIVGNIIANVQ, LLFLGLIRFGFIVEFIPIVAI, AFMTGSAISIAAGQVSTLMGI, FFVSTLRMVFIIILYILVSWL, ILSAISGDIPTTILVLLIEHI, SQELVAIGFTNLLGPFLGGYP, FWLTSPLEVVIFFAGVFVSIF, and IENGIYVTVAASGAVLLWRIA. One can recognise an STAS domain in the interval 551-708; that stretch reads ELQISTPWPG…ENHKGGVQEV (158 aa). An N-linked (GlcNAc...) asparagine glycan is attached at N581. A disordered region spans residues 726-766; sequence EAVPVGTSGSGSTDEKRPEGEGGATNGGMEKGSANGEDIST. Positions 746-755 are enriched in gly residues; sequence EGGATNGGME.

Belongs to the SLC26A/SulP transporter (TC 2.A.53) family. In terms of tissue distribution, mainly found in mycelia.

The protein localises to the membrane. Its function is as follows. Uptake of sulfate into the cell. The chain is Sulfate permease 2 (cys-14) from Neurospora crassa (strain ATCC 24698 / 74-OR23-1A / CBS 708.71 / DSM 1257 / FGSC 987).